Here is a 156-residue protein sequence, read N- to C-terminus: CD-NTase-associated protein 8 (156 aa).

Belongs to the bacterial HORMA family. HORMA3 subfamily. As to quaternary structure, interacts with Cap7 (also called HORMA2) and CdnC; forms CdnD:Cap7:Cap8 (also called CdnD:HORMA2:HORMA3) complexes with stoichiometries of 1:1:1 and 2:1:1.

Its function is as follows. CBASS (cyclic oligonucleotide-based antiphage signaling system) provides immunity against bacteriophage. The CD-NTase protein synthesizes cyclic nucleotides in response to infection; these serve as specific second messenger signals. The signals activate a diverse range of effectors, leading to bacterial cell death and thus abortive phage infection. A type III-C(AAA) CBASS system. Functionally, a member of the CBASS system in this bacteria. It does not seem to bind a closure peptide, its exact function is unknown. The chain is CD-NTase-associated protein 8 from Pseudomonas aeruginosa.